The primary structure comprises 52 residues: Alpha-crystallin B chain (52 aa).

Belongs to the small heat shock protein (HSP20) family. In terms of assembly, homodimer. Aggregates with homologous proteins, including alpha-A-crystallin and the small heat shock protein HSPB1, to form large heteromeric complexes.

May contribute to the transparency and refractive index of the lens. The sequence is that of Alpha-crystallin B chain (CRYAB) from Eudromia elegans (Elegant crested-tinamou).